Here is a 189-residue protein sequence, read N- to C-terminus: Elongation factor P (189 aa).

It belongs to the elongation factor P family.

The protein localises to the cytoplasm. The protein operates within protein biosynthesis; polypeptide chain elongation. In terms of biological role, involved in peptide bond synthesis. Stimulates efficient translation and peptide-bond synthesis on native or reconstituted 70S ribosomes in vitro. Probably functions indirectly by altering the affinity of the ribosome for aminoacyl-tRNA, thus increasing their reactivity as acceptors for peptidyl transferase. The chain is Elongation factor P from Rhizobium johnstonii (strain DSM 114642 / LMG 32736 / 3841) (Rhizobium leguminosarum bv. viciae).